The chain runs to 4144 residues: DNA-dependent protein kinase catalytic subunit (4144 aa).

An N6-acetyllysine modification is found at Lys-127. An HEAT 1 repeat occupies 298–333; it reads DNYVSLFEVLSKWCSHTNVEMKKAAHSALESFLKQV. 3 positions are modified to phosphoserine: Ser-521, Ser-851, and Ser-903. The HEAT 2 repeat unit spans residues 1014-1050; the sequence is QDTVALLETILDGIVDPVDSTLRDFCGRCIREFLKWS. The residue at position 1075 (Ser-1075) is a Phosphoserine. Residue Lys-1219 is modified to N6-acetyllysine. The interaction with C1D stretch occupies residues 1516–1551; that stretch reads LDPSCKRLASGLLELAFAFGGLCEHLVDLLLDTAVL. The segment at 1516–1551 is leucine-zipper; the sequence is LDPSCKRLASGLLELAFAFGGLCEHLVDLLLDTAVL. Residues 1736-1769 form a TPR 1 repeat; that stretch reads PMKSEEFPVGTLRYSNYVDCMKKFLDALELSQSP. Lys-1983 carries the post-translational modification N6-acetyllysine. Ser-2069 is modified (phosphoserine; by autocatalysis). Position 2271 is an N6-acetyllysine (Lys-2271). The tract at residues 2448 to 3228 is KIP-binding; the sequence is LDIIYKMMAK…DHSLSMDEER (781 aa). Thr-2547 is subject to Phosphothreonine. Residue Thr-2621 is modified to Phosphothreonine; by autocatalysis. The residue at position 2624 (Ser-2624) is a Phosphoserine; by autocatalysis. Thr-2650 and Thr-2659 each carry phosphothreonine; by autocatalysis. The segment at 2697–2729 is disordered; the sequence is AQKRNEKSQRAPLKSVGPDFGEKKLGLPGDKVD. Residues 2716 to 2729 show a composition bias toward basic and acidic residues; sequence FGEKKLGLPGDKVD. The interval 2753 to 2781 is may split the end of the DNA molecule, with the two strands separating around the region; it reads EKLSLIYARKGIAEQKREKEIKSELKMKH. A Phosphoserine modification is found at Ser-2805. 3 TPR repeats span residues 2903-2935, 2936-2964, and 2965-2998; these read PVGVRLLEEALLHLGPQEPPAKQFKGRMRVSPD, VVRWMELAKLYRSIGEYDILRGIFSSEIG, and TKQITQSAIFAEARSDYSEAAKQYNEALNKEEWV. One can recognise an FAT domain in the interval 2922 to 3555; sequence PAKQFKGRMR…VYPFIISSES (634 aa). Phosphoserine is present on Ser-3221. Lys-3257, Lys-3276, Lys-3654, and Lys-3658 each carry N6-acetyllysine. The TPR 5 repeat unit spans residues 3711 to 3748; it reads LRNELEIPGQYDGKGKPLPEYHARIAGFDERIKVMASI. The PI3K/PI4K catalytic domain maps to 3738 to 4069; that stretch reads FDERIKVMAS…IHYAKRKLAG (332 aa). The G-loop stretch occupies residues 3744–3750; the sequence is VMASIRK. Ser-3747 and Ser-3837 each carry phosphoserine. Residues 3935–3943 are catalytic loop; sequence GIGDRHLNN. The interval 3955–3980 is activation loop; sequence GIDFGHAFGSATQFLPVPELMPFRLT. A Phosphoserine modification is found at Ser-4042. Residues 4112 to 4144 enclose the FATC domain; sequence NGLSEEAQVKCLIDQATDPNILGRTWIGWEPWM.

The protein belongs to the PI3/PI4-kinase family. As to quaternary structure, DNA-PK is a heterotrimer of PRKDC and the Ku dimer (composed of XRCC6/Ku70 and XRCC5/Ku86). Formation of this complex may be promoted by interaction with ILF3. Component of the core long-range non-homologous end joining (NHEJ) complex (also named DNA-PK complex) composed of PRKDC, LIG4, XRCC4, XRCC6/Ku70, XRCC5/Ku86 and NHEJ1/XLF. Additional component of the NHEJ complex includes PAXX. Following autophosphorylation, PRKDC dissociates from DNA. Interacts with DNA-PKcs-interacting protein (KIP) with the region upstream the kinase domain. PRKDC alone also interacts with and phosphorylates DCLRE1C, thereby activating the latent endonuclease activity of this protein. Interacts with C1D. Interacts with TTI1 and TELO2. Interacts with CIB1. Interacts with SETX. Interacts with NR4A3; the DNA-dependent protein kinase complex DNA-PK phosphorylates and activates NR4A3 and prevents NR4A3 ubiquitination and degradation. Interacts with BRAT1. Part of the HDP-RNP complex composed of at least HEXIM1, PRKDC, XRCC5, XRCC6, paraspeckle proteins (SFPQ, NONO, PSPC1, RBM14, and MATR3) and NEAT1 RNA. Interacts with KAT5. Autophosphorylated at two clusters, the T2609 cluster and the S2056 cluster. Autophosphorylated on Ser-2069, Thr-2621, Thr-2650 and Thr-2659. Ser-2069 and Thr-2621 are DNA damage-inducible phosphorylation sites (inducible with ionizing radiation, IR) dephosphorylated by PPP5C. Autophosphorylation induces a conformational change that leads to remodeling of the DNA-PK complex, requisite for efficient end processing and DNA repair. Autophosphorylation in trans within DNA-PK complexes loaded on DNA ends leads to the dissociation of PRKDC from DNA and the transition into the short-range NHEJ complex. Autophosphorylation of the T2609 cluster is required for hematopoietic development and protein synthesis in erythrocytes precursors. In terms of processing, S-nitrosylated by GAPDH. Post-translationally, polyubiquitinated by RNF144A, leading to proteasomal degradation.

The protein localises to the nucleus. The protein resides in the nucleolus. It localises to the cytoplasm. It is found in the cytosol. The catalysed reaction is L-seryl-[protein] + ATP = O-phospho-L-seryl-[protein] + ADP + H(+). The enzyme catalyses L-threonyl-[protein] + ATP = O-phospho-L-threonyl-[protein] + ADP + H(+). Activity seems to be attenuated by autophosphorylation. Binding to the SL1 region of U3 small nucleolar RNA promotes auto-phosphorylation activity. Inhibited by wortmannin. Serine/threonine-protein kinase that acts as a molecular sensor for DNA damage. Involved in DNA non-homologous end joining (NHEJ) required for double-strand break (DSB) repair and V(D)J recombination. Must be bound to DNA to express its catalytic properties. Promotes processing of hairpin DNA structures in V(D)J recombination by activation of the hairpin endonuclease artemis (DCLRE1C). Recruited by XRCC5 and XRCC6 to DNA ends and is required to (1) protect and align broken ends of DNA, thereby preventing their degradation, (2) and sequester the DSB for repair by NHEJ. Acts as a scaffold protein to aid the localization of DNA repair proteins to the site of damage. The assembly of the DNA-PK complex at DNA ends is also required for the NHEJ ligation step. Found at the ends of chromosomes, suggesting a further role in the maintenance of telomeric stability and the prevention of chromosomal end fusion. Also involved in modulation of transcription. As part of the DNA-PK complex, involved in the early steps of ribosome assembly by promoting the processing of precursor rRNA into mature 18S rRNA in the small-subunit processome. Binding to U3 small nucleolar RNA, recruits PRKDC and XRCC5/Ku86 to the small-subunit processome. Recognizes the substrate consensus sequence [ST]-Q. Phosphorylates 'Ser-139' of histone variant H2AX, thereby regulating DNA damage response mechanism. Phosphorylates ASF1A, DCLRE1C, c-Abl/ABL1, histone H1, HSPCA, c-jun/JUN, p53/TP53, PARP1, POU2F1, DHX9, FH, SRF, NHEJ1/XLF, XRCC1, XRCC4, XRCC5, XRCC6, WRN, MYC and RFA2. Can phosphorylate C1D not only in the presence of linear DNA but also in the presence of supercoiled DNA. Ability to phosphorylate p53/TP53 in the presence of supercoiled DNA is dependent on C1D. Acts as a regulator of the phosphatidylinositol 3-kinase/protein kinase B signal transduction by mediating phosphorylation of 'Ser-473' of protein kinase B (PKB/AKT1, PKB/AKT2, PKB/AKT3), promoting their activation. Contributes to the determination of the circadian period length by antagonizing phosphorylation of CRY1 'Ser-588' and increasing CRY1 protein stability, most likely through an indirect mechanism. Plays a role in the regulation of DNA virus-mediated innate immune response by assembling into the HDP-RNP complex, a complex that serves as a platform for IRF3 phosphorylation and subsequent innate immune response activation through the cGAS-STING pathway. Also regulates the cGAS-STING pathway by catalyzing phosphorylation of CGAS, thereby impairing CGAS oligomerization and activation. Also regulates the cGAS-STING pathway by mediating phosphorylation of PARP1. The protein is DNA-dependent protein kinase catalytic subunit (PRKDC) of Canis lupus familiaris (Dog).